We begin with the raw amino-acid sequence, 218 residues long: Large ribosomal subunit protein uL4 (218 aa).

The tract at residues 46–100 (ARQGTHSTKTRAEVRGGGRKPFRQKGTGRARQGSIRAPHFTGGGISHGPKPRDYA) is disordered. Basic residues predominate over residues 62–73 (GGRKPFRQKGTG).

Belongs to the universal ribosomal protein uL4 family. Part of the 50S ribosomal subunit.

One of the primary rRNA binding proteins, this protein initially binds near the 5'-end of the 23S rRNA. It is important during the early stages of 50S assembly. It makes multiple contacts with different domains of the 23S rRNA in the assembled 50S subunit and ribosome. Its function is as follows. Forms part of the polypeptide exit tunnel. This chain is Large ribosomal subunit protein uL4, found in Corynebacterium efficiens (strain DSM 44549 / YS-314 / AJ 12310 / JCM 11189 / NBRC 100395).